We begin with the raw amino-acid sequence, 31 residues long: Gamma-conotoxin-like As7a (31 aa).

Cystine bridges form between Cys-2/Cys-16, Cys-9/Cys-20, and Cys-15/Cys-31. Glu-14 is modified (4-carboxyglutamate).

The protein belongs to the conotoxin O1 superfamily. As to expression, expressed by the venom duct.

It localises to the secreted. In terms of biological role, gamma-conotoxins may act on voltage-gated non-specific cation pacemaker channels (HCN). Elicits toxic effects in the freshwater snail Pomacea paludosa after intramuscular injection, but it has no effect when injected intracerebrally into mice. The chain is Gamma-conotoxin-like As7a from Conus cancellatus (Cancellate cone).